We begin with the raw amino-acid sequence, 320 residues long: Putative membrane-bound redox modulator Alx (320 aa).

Residues 1–6 (MNTVGT) are Periplasmic-facing. A helical membrane pass occupies residues 7–27 (PLLWGGFAVVVAIMLAIDLLL). Over 28–43 (QGRRGAHAMTMKQAAA) the chain is Cytoplasmic. A helical transmembrane segment spans residues 44 to 64 (WSLVWVTLSLLFNAAFWWYLV). Topologically, residues 65–89 (QTEGRAVADPQALAFLTGYLIEKSL) are periplasmic. A helical transmembrane segment spans residues 90–110 (AVDNVFVWLMLFSYFSVPAAL). Residues 111 to 113 (QRR) are Cytoplasmic-facing. The helical transmembrane segment at 114-134 (VLVYGVLGAIVLRTIMIFTGS) threads the bilayer. Trp135 is a topological domain (periplasmic). A helical transmembrane segment spans residues 136-156 (LISQFDWILYIFGAFLLFTGV). At 157 to 198 (KMALAHEDESGIGDKPLVRWLRGHLRMTDTIDNEHFFVRKNG) the chain is on the cytoplasmic side. Residues 199-219 (LLYATPLMLVLILVELSDVIF) form a helical membrane-spanning segment. Topologically, residues 220-225 (AVDSIP) are periplasmic. Residues 226–246 (AIFAVTTDPFIVLTSNLFAIL) traverse the membrane as a helical segment. Residues 247–261 (GLRAMYFLLAGVAER) are Cytoplasmic-facing. A helical transmembrane segment spans residues 262 to 282 (FSMLKYGLAVILVFIGIKMLI). Over 283–286 (VDFY) the chain is Periplasmic. The chain crosses the membrane as a helical span at residues 287-307 (HIPIAVSLGVVFGILVMTFII). The Cytoplasmic segment spans residues 308–320 (NAWVNYRHDKQRG).

Belongs to the TerC family.

The protein localises to the cell inner membrane. Functionally, has been proposed to be a redox modulator. This chain is Putative membrane-bound redox modulator Alx (alx), found in Shigella flexneri.